The following is a 114-amino-acid chain: Probable 4-amino-4-deoxy-L-arabinose-phosphoundecaprenol flippase subunit ArnE (114 aa).

3 helical membrane-spanning segments follow: residues 41–61, 64–84, and 94–114; these read PWLIASVAALGCGMLLWIYLL, LPLSMAYPMLSINLVLVLVGS, and YHNWLGVGAIIVGALLLGGLL. The region spanning 43–112 is the EamA domain; sequence LIASVAALGC…IIVGALLLGG (70 aa).

This sequence belongs to the ArnE family. Heterodimer of ArnE and ArnF.

It is found in the cell inner membrane. The protein operates within bacterial outer membrane biogenesis; lipopolysaccharide biosynthesis. Its function is as follows. Translocates 4-amino-4-deoxy-L-arabinose-phosphoundecaprenol (alpha-L-Ara4N-phosphoundecaprenol) from the cytoplasmic to the periplasmic side of the inner membrane. This chain is Probable 4-amino-4-deoxy-L-arabinose-phosphoundecaprenol flippase subunit ArnE, found in Aeromonas hydrophila subsp. hydrophila (strain ATCC 7966 / DSM 30187 / BCRC 13018 / CCUG 14551 / JCM 1027 / KCTC 2358 / NCIMB 9240 / NCTC 8049).